Consider the following 187-residue polypeptide: MILPINTYSDPVLTAKAKPLKGVDSSIRELIADMFDSMYKAPGIGLAAPQVGHSLRLLVVDISTIKEYADYKPMVVINPRIVSVAGRNAMEEGCLSVPGVAGDVVRPSKITLHYRDEKFEEHTEEFSDMMARVLQHEIDHLDGTLFVDRMEKRDRRKVQKTLDAIKQGRVKTSYPIAPHAPKIAVEA.

Cysteine 94 and histidine 136 together coordinate Fe cation. Glutamate 137 is a catalytic residue. Position 140 (histidine 140) interacts with Fe cation.

It belongs to the polypeptide deformylase family. Fe(2+) serves as cofactor.

The catalysed reaction is N-terminal N-formyl-L-methionyl-[peptide] + H2O = N-terminal L-methionyl-[peptide] + formate. Functionally, removes the formyl group from the N-terminal Met of newly synthesized proteins. Requires at least a dipeptide for an efficient rate of reaction. N-terminal L-methionine is a prerequisite for activity but the enzyme has broad specificity at other positions. This Chlorobaculum parvum (strain DSM 263 / NCIMB 8327) (Chlorobium vibrioforme subsp. thiosulfatophilum) protein is Peptide deformylase.